A 434-amino-acid chain; its full sequence is MRRNRVDVITLGCSKNLVDSEVLMRQFLSNGYTVHHDPASVCGEIVVVNTCGFIGDAQEESVNTILEMVEAKKAGRIGSLYVMGCLSERFREDLKKEIPEVDAYYGKFDWKQLISHLGKSYYAEAENRRKLTTPRHYAYLKISEGCDRSCSYCAIPIITGRHRSRPMEDLVEEVRMLVKHGTREFQLIAQDLTFYGLDLYGANRLAELTARLSDIKGVEWLRLHYAYPAQFPLDLLPVMRERPNVCKYLDMALQHISDPMLRRMRRRITKAETYELIERIRTEVPGIHLRTTLMTGHPGETERDFEELLQFVRDIRFERLGAFTYSHESGTYCDKNYQDDIPESVKQERLGELMAVQERISAAHNEAKIGSRLRVVIDRAEDGFYVGRTEYDSPEVDPEVLIPFVSGQELKPGRFYMAEVTGAEPFDLYARIVD.

Residues 4 to 122 (NRVDVITLGC…LISHLGKSYY (119 aa)) form the MTTase N-terminal domain. 6 residues coordinate [4Fe-4S] cluster: Cys13, Cys51, Cys85, Cys146, Cys150, and Cys153. The Radical SAM core domain maps to 132–363 (TTPRHYAYLK…MAVQERISAA (232 aa)). The TRAM domain occupies 366–434 (EAKIGSRLRV…PFDLYARIVD (69 aa)).

This sequence belongs to the methylthiotransferase family. RimO subfamily. [4Fe-4S] cluster serves as cofactor.

It localises to the cytoplasm. The catalysed reaction is L-aspartate(89)-[ribosomal protein uS12]-hydrogen + (sulfur carrier)-SH + AH2 + 2 S-adenosyl-L-methionine = 3-methylsulfanyl-L-aspartate(89)-[ribosomal protein uS12]-hydrogen + (sulfur carrier)-H + 5'-deoxyadenosine + L-methionine + A + S-adenosyl-L-homocysteine + 2 H(+). Its function is as follows. Catalyzes the methylthiolation of an aspartic acid residue of ribosomal protein uS12. The protein is Ribosomal protein uS12 methylthiotransferase RimO of Porphyromonas gingivalis (strain ATCC 33277 / DSM 20709 / CIP 103683 / JCM 12257 / NCTC 11834 / 2561).